The chain runs to 287 residues: Leukocyte-associated immunoglobulin-like receptor 1 (287 aa).

Residues 1 to 21 form the signal peptide; that stretch reads MSPHPTALLGLVLCLAQTIHT. The Extracellular portion of the chain corresponds to 22-165; it reads QEEDLPRPSI…SQGLKAEHLY (144 aa). One can recognise an Ig-like C2-type domain in the interval 29 to 117; the sequence is PSISAEPGTV…KWSEQSDYLE (89 aa). C49 and C101 are disulfide-bonded. The N-linked (GlcNAc...) asparagine glycan is linked to N69. The interval 121 to 155 is disordered; sequence KESSGGPDSPDTEPGSSAGPTQRPSDNSHNEHAPA. Positions 134–145 are enriched in polar residues; the sequence is PGSSAGPTQRPS. The chain crosses the membrane as a helical span at residues 166–186; the sequence is ILIGVSVVFLFCLLLLVLFCL. Residues 187–287 are Cytoplasmic-facing; sequence HRQNQIKQGP…SITYAAVARH (101 aa). Residues 192-211 are disordered; sequence IKQGPPRSKDEEQKPQQRPD. Basic and acidic residues predominate over residues 198 to 208; it reads RSKDEEQKPQQ. 2 consecutive short sequence motifs (ITIM motif) follow at residues 249-254 and 279-284; these read VTYAQL and ITYAAV. Phosphotyrosine occurs at positions 251 and 281.

As to quaternary structure, interacts with SH2 domains of tyrosine-protein phosphatases PTPN6 and PTPN11. The interaction with PTPN6 is constitutive. Interacts with the SH2 domain of CSK. Binds with high affinity to extracellular matrix collagens, the interaction is functionally important. In terms of processing, phosphorylation at Tyr-251 and Tyr-281 activates it. May be phosphorylated by LCK. Post-translationally, N-glycosylated. In terms of tissue distribution, expressed on the majority of peripheral mononuclear cells, including natural killer (NK) cells, T-cells, B-cells, monocytes, and dendritic cells. Highly expressed in naive T-cells and B-cells but no expression on germinal center B-cells. Abnormally low expression in naive B-cells from HIV-1 infected patients. Very low expression in NK cells from a patient with chronic active Epstein-Barr virus infection.

It is found in the cell membrane. Functions as an inhibitory receptor that plays a constitutive negative regulatory role on cytolytic function of natural killer (NK) cells, B-cells and T-cells. Activation by Tyr phosphorylation results in recruitment and activation of the phosphatases PTPN6 and PTPN11. It also reduces the increase of intracellular calcium evoked by B-cell receptor ligation. May also play its inhibitory role independently of SH2-containing phosphatases. Modulates cytokine production in CD4+ T-cells, down-regulating IL2 and IFNG production while inducing secretion of transforming growth factor beta. Also down-regulates IgG and IgE production in B-cells as well as IL8, IL10 and TNF secretion. Inhibits proliferation and induces apoptosis in myeloid leukemia cell lines as well as prevents nuclear translocation of NF-kappa-B p65 subunit/RELA and phosphorylation of I-kappa-B alpha/CHUK in these cells. Inhibits the differentiation of peripheral blood precursors towards dendritic cells. This chain is Leukocyte-associated immunoglobulin-like receptor 1 (LAIR1), found in Homo sapiens (Human).